Here is a 273-residue protein sequence, read N- to C-terminus: SKA complex subunit 1 homolog (273 aa).

Residues 77 to 97 adopt a coiled-coil conformation; that stretch reads KKLVQRSLKEEEKLQHMLANL.

The protein belongs to the SKA1 family.

The chain is SKA complex subunit 1 homolog from Zea mays (Maize).